A 540-amino-acid chain; its full sequence is MAKDPGRVLIFDTTLRDGEQSPGASLNLEEKLAIAQQLARLGVDVIEAGFPFASPGDFAAVQRIAQQVGGENGPIICGLARASRGDIKACADAVAPAPKQRIHTFIATSDIHLEHKLRKSRKDVLGIVPEMVAYARSFVDDVEFSCEDAGRSDPEFLYEVIEAAISAGASTVNIPDTVGYTTPTEFGRLIEGINRNVPNIDEAVISVHGHNDLGLAVANFLEAVKSGARQLECTVNGIGERAGNAALEELVMAMHVRRRYFNPFFGRDEDSPTPLTAVRTEEITKTSRLVSNLTGMVVQPNKAIVGANAFAHESGIHQDGVLKNRLTYEIVDARTVGLTDNRISLGKLSGRSAVRARLEELGYDLSREDLDDAFARFKDLADRKREITDRDLESIVSVQVQQPDAKYQLKLVQVSCGSSLQPTATVTLADENGQEQTAASVGTGPVDAVCRSLNQLAGEPNELVEFSVKSVTEGIDAMGDVTIRLRRDGQLYSGHSAHTDVVVAAAEAFVNALNRLVAGTAGPTIHPQLDMAQLDSSPVH.

Residues 8 to 273 (VLIFDTTLRD…FFGRDEDSPT (266 aa)) form the Pyruvate carboxyltransferase domain. Residues Asp-17, His-208, His-210, and Asn-244 each coordinate Mn(2+). Residues 408–540 (QLKLVQVSCG…MAQLDSSPVH (133 aa)) form a regulatory domain region.

The protein belongs to the alpha-IPM synthase/homocitrate synthase family. LeuA type 1 subfamily. Homodimer. Mn(2+) is required as a cofactor.

The protein resides in the cytoplasm. It carries out the reaction 3-methyl-2-oxobutanoate + acetyl-CoA + H2O = (2S)-2-isopropylmalate + CoA + H(+). Its pathway is amino-acid biosynthesis; L-leucine biosynthesis; L-leucine from 3-methyl-2-oxobutanoate: step 1/4. Functionally, catalyzes the condensation of the acetyl group of acetyl-CoA with 3-methyl-2-oxobutanoate (2-ketoisovalerate) to form 3-carboxy-3-hydroxy-4-methylpentanoate (2-isopropylmalate). This chain is 2-isopropylmalate synthase, found in Synechococcus sp. (strain CC9311).